Consider the following 230-residue polypeptide: Large ribosomal subunit protein uL1 (230 aa).

Belongs to the universal ribosomal protein uL1 family. Part of the 50S ribosomal subunit.

Functionally, binds directly to 23S rRNA. The L1 stalk is quite mobile in the ribosome, and is involved in E site tRNA release. Its function is as follows. Protein L1 is also a translational repressor protein, it controls the translation of the L11 operon by binding to its mRNA. This is Large ribosomal subunit protein uL1 from Bradyrhizobium diazoefficiens (strain JCM 10833 / BCRC 13528 / IAM 13628 / NBRC 14792 / USDA 110).